We begin with the raw amino-acid sequence, 858 residues long: Translation initiation factor IF-2 (858 aa).

The interval 59 to 147 is disordered; it reads KEHAEKRRER…GKKLEGQERK (89 aa). The 170-residue stretch at 361 to 530 folds into the tr-type G domain; the sequence is PRPPVVVVMG…LLVADLLELK (170 aa). Residues 370 to 377 form a G1 region; sequence GHVDHGKT. 370–377 lines the GTP pocket; sequence GHVDHGKT. The interval 395-399 is G2; it reads GITQH. Residues 416–419 are G3; the sequence is DTPG. GTP contacts are provided by residues 416 to 420 and 470 to 473; these read DTPGH and NKID. A G4 region spans residues 470-473; the sequence is NKID. A G5 region spans residues 506–508; that stretch reads SAK.

Belongs to the TRAFAC class translation factor GTPase superfamily. Classic translation factor GTPase family. IF-2 subfamily.

The protein resides in the cytoplasm. In terms of biological role, one of the essential components for the initiation of protein synthesis. Protects formylmethionyl-tRNA from spontaneous hydrolysis and promotes its binding to the 30S ribosomal subunits. Also involved in the hydrolysis of GTP during the formation of the 70S ribosomal complex. In Caldicellulosiruptor saccharolyticus (strain ATCC 43494 / DSM 8903 / Tp8T 6331), this protein is Translation initiation factor IF-2.